A 721-amino-acid chain; its full sequence is Kinesin-like protein KIF2C (721 aa).

The tract at residues 1 to 250 (MESLHARLFP…CSPLTVTDPI (250 aa)) is globular. Serine 3 and serine 19 each carry phosphoserine. Serine 92 bears the Phosphoserine; by AURKB mark. The Microtubule tip localization signal signature appears at 95–98 (SKIP). 7 positions are modified to phosphoserine: serine 106, serine 108, serine 112, serine 162, serine 171, serine 183, and serine 188. A disordered region spans residues 164 to 188 (EAEEQAHSTRSTSSANPGNSVRRKS). The span at 171-182 (STRSTSSANPGN) shows a compositional bias: polar residues. A negative regulator of microtubule-binding region spans residues 203 to 234 (EKRAQNSELRIKRAQEYDSSFPNWEFARMIKE). Residues 254–584 (RICVCVRKRP…LRYADRVKEL (331 aa)) enclose the Kinesin motor domain. ATP contacts are provided by residues arginine 260 and 344–351 (GQTGSGKT). Serine 515 and serine 626 each carry phosphoserine. Residues 614 to 652 (GNEEEELSSQMSSFNEAMTQIRELEERALEELREIIQQG) are a coiled coil.

It belongs to the TRAFAC class myosin-kinesin ATPase superfamily. Kinesin family. MCAK/KIF2 subfamily. Interacts with CENPH. Interacts with MTUS2/TIP150; the interaction is direct. Interacts with MAPRE1; the interaction is direct, regulated by phosphorylation and is probably required for targeting to growing microtubule plus ends. Interacts with KIF18B at microtubule tips; this interaction increases the affinity of both partners for microtubule plus ends and is required for robust microtubule depolymerization. Phosphorylation by AURKA or AURKB strongly reduces KIF18B-binding. Post-translationally, phosphorylation by AURKB, regulates association with centromeres and kinetochores and the microtubule depolymerization activity. In terms of processing, ubiquitinated.

Its subcellular location is the cytoplasm. It is found in the cytoskeleton. The protein localises to the nucleus. It localises to the chromosome. The protein resides in the centromere. Its subcellular location is the kinetochore. Its function is as follows. In complex with KIF18B, constitutes the major microtubule plus-end depolymerizing activity in mitotic cells. Regulates the turnover of microtubules at the kinetochore and functions in chromosome segregation during mitosis. Plays a role in chromosome congression and is required for the lateral to end-on conversion of the chromosome-microtubule attachment. In Mus musculus (Mouse), this protein is Kinesin-like protein KIF2C (Kif2c).